Here is a 181-residue protein sequence, read N- to C-terminus: ATP synthase subunit delta (181 aa).

It belongs to the ATPase delta chain family. F-type ATPases have 2 components, F(1) - the catalytic core - and F(0) - the membrane proton channel. F(1) has five subunits: alpha(3), beta(3), gamma(1), delta(1), epsilon(1). F(0) has three main subunits: a(1), b(2) and c(10-14). The alpha and beta chains form an alternating ring which encloses part of the gamma chain. F(1) is attached to F(0) by a central stalk formed by the gamma and epsilon chains, while a peripheral stalk is formed by the delta and b chains.

It is found in the cell inner membrane. Functionally, f(1)F(0) ATP synthase produces ATP from ADP in the presence of a proton or sodium gradient. F-type ATPases consist of two structural domains, F(1) containing the extramembraneous catalytic core and F(0) containing the membrane proton channel, linked together by a central stalk and a peripheral stalk. During catalysis, ATP synthesis in the catalytic domain of F(1) is coupled via a rotary mechanism of the central stalk subunits to proton translocation. In terms of biological role, this protein is part of the stalk that links CF(0) to CF(1). It either transmits conformational changes from CF(0) to CF(1) or is implicated in proton conduction. The protein is ATP synthase subunit delta of Chlorobium limicola (strain DSM 245 / NBRC 103803 / 6330).